Reading from the N-terminus, the 1029-residue chain is Sodium/potassium-transporting ATPase subunit alpha-4 (1029 aa).

Residues 1–37 (MGLWGKKGTVAPHDQSPRRRPKKGLIKKKMVKREKQK) are disordered. At 1-95 (MGLWGKKGTV…NTVTPPPTTP (95 aa)) the chain is on the cytoplasmic side. Residues 18–36 (RRRPKKGLIKKKMVKREKQ) show a composition bias toward basic residues. The tract at residues 90-92 (PPP) is interaction with phosphoinositide-3 kinase. Residues 96 to 116 (EWVKFCKQLFGGFSLLLWTGA) traverse the membrane as a helical segment. Residues 117–139 (ILCFVAYSIQIYFNEEPTKDNLY) are Extracellular-facing. Residues 140–160 (LSIVLSVVVIVTGCFSYYQEA) traverse the membrane as a helical segment. The Cytoplasmic portion of the chain corresponds to 161-296 (KSSKIMESFK…VGQTPIAAEI (136 aa)). Residues 223 to 237 (NSSLTGESEPQSRSP) show a composition bias toward polar residues. Positions 223–242 (NSSLTGESEPQSRSPDFTHE) are disordered. Residues 297-316 (EHFIHLITVVAVFLGVTFFA) form a helical membrane-spanning segment. Topologically, residues 317–328 (LSLLLGYGWLEA) are extracellular. Residues 329–346 (IIFLIGIIVANVPEGLLA) form a helical membrane-spanning segment. Residues 347-778 (TVTVCLTLTA…EEGRLIFDNL (432 aa)) are Cytoplasmic-facing. Asp384 functions as the 4-aspartylphosphate intermediate in the catalytic mechanism. Mg(2+) contacts are provided by Asp723 and Asp727. A helical membrane pass occupies residues 779–798 (KKSIMYTLTSNIPEITPFLM). Topologically, residues 799-808 (FIILGIPLPL) are extracellular. A helical transmembrane segment spans residues 809 to 829 (GTITILCIDLGTDMVPAISLA). Residues 830–849 (YESAESDIMKRLPRNPKTDN) lie on the Cytoplasmic side of the membrane. Residues 850–872 (LVNHRLIGMAYGQIGMIQALAGF) traverse the membrane as a helical segment. Over 873 to 924 (FTYFVILAENGFRPVDLLGIRLHWEDKYLNDLEDSYGQQWTYEQRKVVEFTC) the chain is Extracellular. The chain crosses the membrane as a helical span at residues 925-944 (QTAFFVTIVVVQWADLIISK). Residues 945–957 (TRRNSLFQQGMRN) are Cytoplasmic-facing. Ser949 carries the phosphoserine; by PKA modification. Residues 958 to 976 (KVLIFGILEETLLAAFLSY) traverse the membrane as a helical segment. Topologically, residues 977–991 (TPGMDVALRMYPLKI) are extracellular. Residues 992–1012 (TWWLCAIPYSILIFVYDEIRK) form a helical membrane-spanning segment. Residues 1013–1029 (LLIRQHPDGWVERETYY) are Cytoplasmic-facing.

Belongs to the cation transport ATPase (P-type) (TC 3.A.3) family. Type IIC subfamily. In terms of assembly, the sodium/potassium-transporting ATPase is composed of a catalytic alpha subunit, an auxiliary non-catalytic beta subunit and an additional regulatory subunit. In terms of tissue distribution, specifically expressed in testis. Found in very low levels in skeletal muscle. Expressed in mature sperm (at protein level).

It localises to the cell membrane. The catalysed reaction is K(+)(out) + Na(+)(in) + ATP + H2O = K(+)(in) + Na(+)(out) + ADP + phosphate + H(+). Specifically inhibited by an endogenous cardiac glycoside, ouabain. This is the catalytic component of the active enzyme, which catalyzes the hydrolysis of ATP coupled with the exchange of sodium and potassium ions across the plasma membrane. This action creates the electrochemical gradient of sodium and potassium ions, providing the energy for active transport of various nutrients. Plays a role in sperm motility. The protein is Sodium/potassium-transporting ATPase subunit alpha-4 of Homo sapiens (Human).